Here is a 78-residue protein sequence, read N- to C-terminus: MLVLLQAVCITVLTLLLIGRLQLLERLLLNHSFNLKTVDDFNILYRSLAETRLLKVVLRLIFLVLLGFCCYRLLVILM.

The first 23 residues, 1-23 (MLVLLQAVCITVLTLLLIGRLQL), serve as a signal peptide directing secretion. A helical membrane pass occupies residues 56–76 (VVLRLIFLVLLGFCCYRLLVI).

Belongs to the coronaviruses ns7/ns7a protein family.

It is found in the host membrane. Functionally, may function in the formation of membrane-bound replication complexes or in the assembly of the virus. The sequence is that of Non-structural protein 7 from Porcine respiratory coronavirus (strain 86/137004 / isolate British) (PRCoV).